A 171-amino-acid chain; its full sequence is Transcriptional repressor NrdR (171 aa).

The segment covering 1–10 has biased composition (basic residues); it reads MQCPHCHHNG. Residues 1–21 form a disordered region; it reads MQCPHCHHNGSRVVDSRPTDD. Residues 3 to 34 fold into a zinc finger; it reads CPHCHHNGSRVVDSRPTDDGRVIRRRRECENC. Residues 49 to 139 form the ATP-cone domain; sequence LLVIKKNGAR…VYRQFKDMHV (91 aa). A disordered region spans residues 152–171; the sequence is KVKLAKPSAKTTHAPKRKKD.

The protein belongs to the NrdR family. Zn(2+) serves as cofactor.

Its function is as follows. Negatively regulates transcription of bacterial ribonucleotide reductase nrd genes and operons by binding to NrdR-boxes. The protein is Transcriptional repressor NrdR of Lactiplantibacillus plantarum (strain ATCC BAA-793 / NCIMB 8826 / WCFS1) (Lactobacillus plantarum).